A 107-amino-acid chain; its full sequence is Ribonuclease P protein component 4 (107 aa).

Positions 66, 69, 92, and 95 each coordinate Zn(2+).

The protein belongs to the eukaryotic/archaeal RNase P protein component 4 family. In terms of assembly, consists of a catalytic RNA component and at least 4-5 protein subunits. Requires Zn(2+) as cofactor.

Its subcellular location is the cytoplasm. It carries out the reaction Endonucleolytic cleavage of RNA, removing 5'-extranucleotides from tRNA precursor.. Its function is as follows. Part of ribonuclease P, a protein complex that generates mature tRNA molecules by cleaving their 5'-ends. The protein is Ribonuclease P protein component 4 of Methanosarcina mazei (strain ATCC BAA-159 / DSM 3647 / Goe1 / Go1 / JCM 11833 / OCM 88) (Methanosarcina frisia).